Here is a 957-residue protein sequence, read N- to C-terminus: MTQTLSQLENSGAFIERHIGPDAAQQQEMLNAVGAQSLNALTGQIVPKDIQLATPPQVGAPATEYAALAELKAIASRNKRFTSYIGMGYTAVQLPPVILRNMLENPGWYTAYTPYQPEVSQGRLEALLNFQQVTLDLTGLDMASASLLDEATAAAEAMAMAKRVSKLKNANRFFVASDVHPQTLDVVRTRAETFGFEVIVDDAQKVLDHQDVFGVLLQQVGTTGEIHDYTALISELKSRKIVVSVAADIMALVLLTAPGKQGADIVFGSAQRFGVPMGYGGPHAAFFAAKDEYKRSMPGRIIGVSKDAAGNTALRMAMQTREQHIRREKANSNICTSQVLLTNIASLYAVYHGPVGLKRIANRIHRLTDILAAGLQQKGLKLRHAHYFDTLCVEVVDKAGVLARAEAAEINLRSDILNAVGITLDETTTRENVMQLFSVLLGDNHGLDIDTLDKDVAHDSRSIQAAMLRDDEILTHPVFNRYHSETEMMRYMHSLERKDLALNQAMIPLGSCTMKLNAAAEMIPITWPEFAELHPFCPPEQAEGYQQMIAQLADWLVKLTGYDAVCMQPNSGAQGEYAGLLAIRHYHESRNEGHRDICLIPASAHGTNPASAHMAGMQVVVVACDKNGNIDLTDLRAKAEQAGDNLSCIMVTYPSTHGVYEETIREVCEVVHQFGGQVYLDGANMNAQVGITSPGFIGADVSHLNLHKTFCIPHGGGGPGMGPIGVKAHLAPFVPGHSVVQIEGMLTRQGAVSAAPFGSASILPISWMYIRMMGAEGLKKASQVAILNANYIASRLQDAFPVLYTGRDGRVAHECILDIRPLKEETGISELDIAKRLIDYGFHAPTMSFPVAGTLMVEPTESESKVELDRFIDAMLAIRAEIDQVKAGVWPLEDNPLVNAPHIQSELVAEWAHPYSREVAVFPAGVADKYWPTVKRLDDVYGDRNLFCSCVPISEYQ.

An N6-(pyridoxal phosphate)lysine modification is found at K708.

The protein belongs to the GcvP family. The glycine cleavage system is composed of four proteins: P, T, L and H. It depends on pyridoxal 5'-phosphate as a cofactor.

The catalysed reaction is N(6)-[(R)-lipoyl]-L-lysyl-[glycine-cleavage complex H protein] + glycine + H(+) = N(6)-[(R)-S(8)-aminomethyldihydrolipoyl]-L-lysyl-[glycine-cleavage complex H protein] + CO2. In terms of biological role, the glycine cleavage system catalyzes the degradation of glycine. The P protein binds the alpha-amino group of glycine through its pyridoxal phosphate cofactor; CO(2) is released and the remaining methylamine moiety is then transferred to the lipoamide cofactor of the H protein. The protein is Glycine dehydrogenase (decarboxylating) of Escherichia coli O1:K1 / APEC.